The chain runs to 144 residues: 3-hydroxyacyl-[acyl-carrier-protein] dehydratase FabZ (144 aa).

The active site involves histidine 48.

The protein belongs to the thioester dehydratase family. FabZ subfamily.

The protein localises to the cytoplasm. The enzyme catalyses a (3R)-hydroxyacyl-[ACP] = a (2E)-enoyl-[ACP] + H2O. In terms of biological role, involved in unsaturated fatty acids biosynthesis. Catalyzes the dehydration of short chain beta-hydroxyacyl-ACPs and long chain saturated and unsaturated beta-hydroxyacyl-ACPs. This is 3-hydroxyacyl-[acyl-carrier-protein] dehydratase FabZ from Listeria innocua serovar 6a (strain ATCC BAA-680 / CLIP 11262).